A 377-amino-acid chain; its full sequence is Galactoside alpha-(1,2)-fucosyltransferase 1 (377 aa).

The Cytoplasmic portion of the chain corresponds to 1–8 (MWTPSRRQ). The helical; Signal-anchor for type II membrane protein transmembrane segment at 9–26 (LCLAFLLVCVLSAGSFFF) threads the bilayer. Residues 27 to 377 (HLNGGNFFRN…WKPDSLFRLV (351 aa)) are Lumenal-facing. Residues N67, N303, and N329 are each glycosylated (N-linked (GlcNAc...) asparagine).

The protein belongs to the glycosyltransferase 11 family. As to expression, in the adult, highly expressed in pancreas, testis and epididymis and to a lesser extent in thymus, lung, stomach, small intestine, colon, spleen and uterus. Not expressed in brain, heart, skeletal muscle, kidney, liver and bone marrow. Expressed in epididymis and testis.

The protein localises to the golgi apparatus. The protein resides in the golgi stack membrane. The enzyme catalyses a beta-D-galactosyl-(1-&gt;4)-N-acetyl-beta-D-glucosaminyl derivative + GDP-beta-L-fucose = an alpha-L-Fuc-(1-&gt;2)-beta-D-Gal-(1-&gt;4)-beta-D-GlcNAc derivative + GDP + H(+). It carries out the reaction a ganglioside GA1 + GDP-beta-L-fucose = a ganglioside Fuc-GA1 + GDP + H(+). The catalysed reaction is a beta-D-Gal-(1-&gt;3)-beta-D-GlcNAc-(1-&gt;3)-beta-D-Gal-(1-&gt;4)-beta-D-Glc-(1&lt;-&gt;1')-Cer(d18:1(4E)) + GDP-beta-L-fucose = alpha-L-fucosyl-(1-&gt;2)- beta-D-galactosyl-(1-&gt;3)-N-acetyl-beta-D-glucosaminyl-(1-&gt;3)-beta-D-galactosyl-(1-&gt;4)-beta-D-glucosyl-(1&lt;-&gt;1')-N-acylsphing-4-enine + GDP + H(+). It catalyses the reaction a neolactoside nLc4Cer(d18:1(4E)) + GDP-beta-L-fucose = a neolactoside IV(2)-alpha-Fuc-nLc4Cer(d18:1(4E)) + GDP + H(+). The enzyme catalyses a ganglioside GM1 + GDP-beta-L-fucose = a ganglioside Fuc-GM1 + GDP + H(+). It carries out the reaction beta-D-galactosyl-(1-&gt;3)-N-acetyl-D-galactosamine + GDP-beta-L-fucose = alpha-L-fucosyl-(1-&gt;2)-beta-D-galactosyl-(1-&gt;3)-N-acetyl-D-galactosamine + GDP + H(+). It participates in protein modification; protein glycosylation. Its function is as follows. Catalyzes the transfer of L-fucose, from a guanosine diphosphate-beta-L-fucose, to the terminal galactose residue of glycoconjugates through an alpha(1,2) linkage leading to H antigen synthesis that is an intermediate substrate in the synthesis of ABO blood group antigens. H antigen is essential for maturation of the glomerular layer of the main olfactory bulb, in cell migration and early cell-cell contacts during tumor associated angiogenesis. Preferentially fucosylates soluble lactose and to a lesser extent, fucosylates glycolipids gangliosides GA1 and GM1a. In Mus musculus (Mouse), this protein is Galactoside alpha-(1,2)-fucosyltransferase 1.